A 314-amino-acid polypeptide reads, in one-letter code: Chlorinase cctP2 (314 aa).

Residues methionine 1–aspartate 14 are compositionally biased toward basic and acidic residues. Positions methionine 1 to glutamate 24 are disordered. Short sequence motifs (HXXHC) lie at residues histidine 150–cysteine 154 and histidine 177–cysteine 181.

Belongs to the ustYa family.

Its pathway is mycotoxin biosynthesis. Chlorinase; part of the gene cluster that mediates the biosynthesis of the mycotoxin cyclochlorotine, a hepatotoxic and carcinogenic cyclic chlorinated pentapeptide. Within the pathway, cctP2 catalyzes the formation of isocyclochlorotine via dichlorination of the Pro from the isocyclotine skeleton. The NRPS cctN initially catalyzes the condensation of L-serine (Ser), Pro, L-2-aminobutyrate (2Abu), Ser, and beta-Phe in this order to produce isocyclotine. After the dichlorination of Pro2 catalyzed by cctP2 to produce isocyclochlorotine, the cctO-mediated transacylation of isocyclochlorotine can furnish cyclochlorotine. The subsequent hydroxylation of cyclochlorotine by cctR yields hydroxycyclochlorotine as the final product. CctP1 probably acts as a phenylalanine aminomutase and provides the uncommon building block beta-Phe. Furthermore, 2Abu can be synthesized from threonine by one of the threonine dehydratases and transaminases localized outside of the cluster. The functions of the remaining proteins encoded by the cluster, cctM and cctT, have not been identified yet. The chain is Chlorinase cctP2 from Talaromyces islandicus (Penicillium islandicum).